Consider the following 588-residue polypeptide: MVTPVTWMDNPIEIYVNDSVWVPGPIDDRCPAKPEEEGMMINISIGYRYPPICLGRAPGCLMPAVQNWLVEVPTVSPISRFTYHMVSGMSLRPRVNYLQDFSYQRSLKFRPKGKPCPKEIPKESKNTEVLVWEECVANSAVILQNNEFGTIIDWAPRGQFYHNCSGQTQSCPSAQVSPAVDSDLTESLDKHKHKKLQSFYPWEWGEKRISTPRPKIVSPVSGPEHPELWRLTVASHHIRIWSGNQTLETRDCKPFYTIDLNSSLTVPLQSCVKPPYMLVVGNIVIKPDSQTITCENCRLLSCIDSTFNWQHRILLVRAREGVWIPVSMDRPWEASPSVHILTEVLKGVLNRSKRFIFTLIAVIMGLIAVTATAAVAGVALHSSVQSVNFVNDWQKNSTRLWNSQSSIDQKLANQINDLRQTVIWMGDRLMSLEHRFQLQCDWNTSDFCITPQIYNESEHHWDMVRRHLQGREDNLTLDISKLKEQIFEASKAHLNLVPGTEAIAGVADGLANLNPVTWVKTIGSTTIINLILILVCLFCLLLVCRCTQQLRRDSDHRERAMMTMAVLSKRKGGNVGKSKRDQIVTVSV.

A fusion peptide region spans residues 355–375; that stretch reads FIFTLIAVIMGLIAVTATAAV. Residues 522–542 form a helical membrane-spanning segment; that stretch reads IGSTTIINLILILVCLFCLLL.

The protein belongs to the beta type-B retroviral envelope protein family. HERV class-II K(HML-2) env subfamily. As to quaternary structure, the surface (SU) and transmembrane (TM) proteins form a heterodimer. SU and TM are attached by noncovalent interactions or by a labile interchain disulfide bond. Specific enzymatic cleavages in vivo yield the mature SU and TM proteins. As to expression, expressed in lung, placenta, testis and peripheral blood lymphocytes.

The protein resides in the virion. The protein localises to the cell membrane. Retroviral envelope proteins mediate receptor recognition and membrane fusion during early infection. Endogenous envelope proteins may have kept, lost or modified their original function during evolution. Functionally, SU mediates receptor recognition. Its function is as follows. TM anchors the envelope heterodimer to the viral membrane through one transmembrane domain. The other hydrophobic domain, called fusion peptide, mediates fusion of the viral membrane with the target cell membrane. The chain is Endogenous retrovirus group K member 7 Env polyprotein (ERVK-7) from Homo sapiens (Human).